The chain runs to 289 residues: Urease accessory protein UreD (289 aa).

This sequence belongs to the UreD family. As to quaternary structure, ureD, UreF and UreG form a complex that acts as a GTP-hydrolysis-dependent molecular chaperone, activating the urease apoprotein by helping to assemble the nickel containing metallocenter of UreC. The UreE protein probably delivers the nickel.

It localises to the cytoplasm. In terms of biological role, required for maturation of urease via the functional incorporation of the urease nickel metallocenter. The polypeptide is Urease accessory protein UreD (Magnetococcus marinus (strain ATCC BAA-1437 / JCM 17883 / MC-1)).